Here is a 279-residue protein sequence, read N- to C-terminus: MATH domain and coiled-coil domain-containing protein At1g31390 (279 aa).

The 129-residue stretch at 6–134 (EKKITWTIKN…NGDVKIVVEV (129 aa)) folds into the MATH domain. Residues 235–271 (KLDWLEKKLKEVCEARVQEIDEEWKDLTDLKENWSSD) are a coiled coil.

The polypeptide is MATH domain and coiled-coil domain-containing protein At1g31390 (Arabidopsis thaliana (Mouse-ear cress)).